A 176-amino-acid chain; its full sequence is Trypsin inhibitor 1B (176 aa).

Cystine bridges form between Cys-39–Cys-83 and Cys-132–Cys-143.

Belongs to the protease inhibitor I3 (leguminous Kunitz-type inhibitor) family.

In terms of biological role, inhibits trypsin stoichiometrically. The protein is Trypsin inhibitor 1B of Erythrina variegata (Indian coral tree).